The chain runs to 111 residues: Large ribosomal subunit protein uL22 (111 aa).

Belongs to the universal ribosomal protein uL22 family. Part of the 50S ribosomal subunit.

This protein binds specifically to 23S rRNA; its binding is stimulated by other ribosomal proteins, e.g. L4, L17, and L20. It is important during the early stages of 50S assembly. It makes multiple contacts with different domains of the 23S rRNA in the assembled 50S subunit and ribosome. In terms of biological role, the globular domain of the protein is located near the polypeptide exit tunnel on the outside of the subunit, while an extended beta-hairpin is found that lines the wall of the exit tunnel in the center of the 70S ribosome. This chain is Large ribosomal subunit protein uL22, found in Chlamydia felis (strain Fe/C-56) (Chlamydophila felis).